We begin with the raw amino-acid sequence, 137 residues long: Peptide methionine sulfoxide reductase MsrB (137 aa).

One can recognise a MsrB domain in the interval A7 to G129. Positions 46, 49, 95, and 98 each coordinate Zn(2+). C118 serves as the catalytic Nucleophile.

Belongs to the MsrB Met sulfoxide reductase family. Zn(2+) is required as a cofactor.

The enzyme catalyses L-methionyl-[protein] + [thioredoxin]-disulfide + H2O = L-methionyl-(R)-S-oxide-[protein] + [thioredoxin]-dithiol. This chain is Peptide methionine sulfoxide reductase MsrB, found in Escherichia coli O45:K1 (strain S88 / ExPEC).